Consider the following 233-residue polypeptide: Phycoerythrobilin synthase (233 aa).

The protein belongs to the HY2 family.

It catalyses the reaction (3Z)-phycoerythrobilin + 2 oxidized 2[4Fe-4S]-[ferredoxin] = biliverdin IXalpha + 2 reduced 2[4Fe-4S]-[ferredoxin] + 4 H(+). Functionally, plays a role in phycoerythrobilin biosynthesis, the red pigment chromophore photosynthetically active biliproteins of the host cyanobacteria. Uses a four-electron reduction to carry out the reactions catalyzed by two enzymes (EC 1.3.7.2 and EC 1.3.7.3) in host. In Prochlorococcus, this protein is Phycoerythrobilin synthase (pebS).